The sequence spans 214 residues: Leucyl/phenylalanyl-tRNA--protein transferase (214 aa).

It belongs to the L/F-transferase family.

Its subcellular location is the cytoplasm. It catalyses the reaction N-terminal L-lysyl-[protein] + L-leucyl-tRNA(Leu) = N-terminal L-leucyl-L-lysyl-[protein] + tRNA(Leu) + H(+). The enzyme catalyses N-terminal L-arginyl-[protein] + L-leucyl-tRNA(Leu) = N-terminal L-leucyl-L-arginyl-[protein] + tRNA(Leu) + H(+). It carries out the reaction L-phenylalanyl-tRNA(Phe) + an N-terminal L-alpha-aminoacyl-[protein] = an N-terminal L-phenylalanyl-L-alpha-aminoacyl-[protein] + tRNA(Phe). Its function is as follows. Functions in the N-end rule pathway of protein degradation where it conjugates Leu, Phe and, less efficiently, Met from aminoacyl-tRNAs to the N-termini of proteins containing an N-terminal arginine or lysine. This is Leucyl/phenylalanyl-tRNA--protein transferase from Cereibacter sphaeroides (strain ATCC 17023 / DSM 158 / JCM 6121 / CCUG 31486 / LMG 2827 / NBRC 12203 / NCIMB 8253 / ATH 2.4.1.) (Rhodobacter sphaeroides).